Here is a 323-residue protein sequence, read N- to C-terminus: Transaldolase (323 aa).

Residue lysine 133 is the Schiff-base intermediate with substrate of the active site.

The protein belongs to the transaldolase family. Type 1 subfamily. Monomer.

It catalyses the reaction D-sedoheptulose 7-phosphate + D-glyceraldehyde 3-phosphate = D-erythrose 4-phosphate + beta-D-fructose 6-phosphate. Its pathway is carbohydrate degradation; pentose phosphate pathway; D-glyceraldehyde 3-phosphate and beta-D-fructose 6-phosphate from D-ribose 5-phosphate and D-xylulose 5-phosphate (non-oxidative stage): step 2/3. Transaldolase important for the balance of metabolites in the pentose-phosphate pathway. Involved in xylose fermentation to ethanol. The protein is Transaldolase of Fusarium oxysporum f. sp. lycopersici (strain 4287 / CBS 123668 / FGSC 9935 / NRRL 34936) (Fusarium vascular wilt of tomato).